The sequence spans 422 residues: 3-phosphoshikimate 1-carboxyvinyltransferase (422 aa).

The 3-phosphoshikimate site is built by K20, S21, and R25. K20 provides a ligand contact to phosphoenolpyruvate. Phosphoenolpyruvate-binding residues include G92 and R120. Positions 163, 164, 165, 191, 304, and 331 each coordinate 3-phosphoshikimate. Q165 provides a ligand contact to phosphoenolpyruvate. The active-site Proton acceptor is the D304. R335 and R377 together coordinate phosphoenolpyruvate.

It belongs to the EPSP synthase family. In terms of assembly, monomer.

The protein localises to the cytoplasm. The enzyme catalyses 3-phosphoshikimate + phosphoenolpyruvate = 5-O-(1-carboxyvinyl)-3-phosphoshikimate + phosphate. Its pathway is metabolic intermediate biosynthesis; chorismate biosynthesis. Its function is as follows. Catalyzes the transfer of the enolpyruvyl moiety of phosphoenolpyruvate (PEP) to the 5-hydroxyl of shikimate-3-phosphate (S3P) to produce enolpyruvyl shikimate-3-phosphate and inorganic phosphate. The polypeptide is 3-phosphoshikimate 1-carboxyvinyltransferase (Methanocorpusculum labreanum (strain ATCC 43576 / DSM 4855 / Z)).